The chain runs to 311 residues: Tricarboxylate transport protein, mitochondrial (311 aa).

A propeptide spans 1–13 (MPAPRAPRALAAA) (removed in mature form). 3 Solcar repeats span residues 23-111 (THPG…LSNH), 122-208 (TRGL…LRNW), and 218-303 (MNPL…VVKL). The next 3 membrane-spanning stretches (helical) occupy residues 29–46 (ILAGGLAGGIEICITFPT), 86–105 (GLSSLLYGSIPKAAVRFGMF), and 129–143 (LGAGVAEAVVVVCPM). The residue at position 156 (Ser-156) is a Phosphoserine. Transmembrane regions (helical) follow at residues 183–202 (GLTATVLKQGSNQAIRFFVM), 224–241 (GVFGAIAGAASVFGNTPL), and 278–297 (GTVPRLGRVCLDVAIVFVIY).

The protein belongs to the mitochondrial carrier (TC 2.A.29) family. In terms of processing, possesses a short cleavable presequence, which, however, is found to be dispensable both for targeting to mitochondria and insertion into the inner membrane. However, the presequence is required to keep SLC25A1 in a soluble state and thus in an import-competent state. Mature SLC25A1 lacking the presequence is prone to aggregation.

The protein localises to the mitochondrion inner membrane. It carries out the reaction (S)-malate(in) + citrate(out) = (S)-malate(out) + citrate(in). It catalyses the reaction D-threo-isocitrate(in) + citrate(out) = D-threo-isocitrate(out) + citrate(in). The catalysed reaction is citrate(out) + succinate(in) = citrate(in) + succinate(out). The enzyme catalyses cis-aconitate(in) + citrate(out) = cis-aconitate(out) + citrate(in). It carries out the reaction trans-aconitate(in) + citrate(out) = trans-aconitate(out) + citrate(in). It catalyses the reaction phosphoenolpyruvate(in) + citrate(out) = phosphoenolpyruvate(out) + citrate(in). The catalysed reaction is maleate(in) + citrate(out) = maleate(out) + citrate(in). Its function is as follows. Mitochondrial electroneutral antiporter that exports citrate from the mitochondria into the cytosol in exchange for malate. Also able to mediate the exchange of citrate for isocitrate, phosphoenolpyruvate, cis-aconitate and to a lesser extent trans-aconitate, maleate and succinate. In the cytoplasm, citrate plays important roles in fatty acid and sterol synthesis, regulation of glycolysis, protein acetylation, and other physiopathological processes. This Homo sapiens (Human) protein is Tricarboxylate transport protein, mitochondrial (SLC25A1).